A 311-amino-acid chain; its full sequence is Heparan sulfate glucosamine 3-O-sulfotransferase 1 (311 aa).

A signal peptide spans 1 to 20 (MTLLLLGAVLLVAQPQLVPS). N-linked (GlcNAc...) asparagine glycosylation is present at Asn52. 3'-phosphoadenylyl sulfate-binding positions include 68-72 (KGGTR), Arg151, and Ser159. N-linked (GlcNAc...) asparagine glycans are attached at residues Asn196, Asn246, and Asn253. A 3'-phosphoadenylyl sulfate-binding site is contributed by Tyr259. An intrachain disulfide couples Cys260 to Cys269. 3'-phosphoadenylyl sulfate is bound at residue 274-278 (KGRAH).

It belongs to the sulfotransferase 1 family.

It localises to the golgi apparatus lumen. It catalyses the reaction alpha-D-glucosaminyl-[heparan sulfate](n) + 3'-phosphoadenylyl sulfate = 3-sulfo-alpha-D-glucosaminyl-[heparan sulfate](n) + adenosine 3',5'-bisphosphate + H(+). Sulfotransferase that utilizes 3'-phospho-5'-adenylyl sulfate (PAPS) to catalyze the transfer of a sulfo group to position 3 of glucosamine residues in heparan. Catalyzes the rate limiting step in the biosynthesis of heparan sulfate (HSact). This modification is a crucial step in the biosynthesis of anticoagulant heparan sulfate as it completes the structure of the antithrombin pentasaccharide binding site. This Rattus norvegicus (Rat) protein is Heparan sulfate glucosamine 3-O-sulfotransferase 1 (Hs3st1).